The primary structure comprises 950 residues: Leucine--tRNA ligase (950 aa).

The short motif at 66–77 (PYPSGAGLHVGH) is the 'HIGH' region element. The 'KMSKS' region signature appears at 721-725 (KIGKS). Residue Lys-724 coordinates ATP.

The protein belongs to the class-I aminoacyl-tRNA synthetase family.

The protein localises to the cytoplasm. It catalyses the reaction tRNA(Leu) + L-leucine + ATP = L-leucyl-tRNA(Leu) + AMP + diphosphate. The chain is Leucine--tRNA ligase from Nocardia farcinica (strain IFM 10152).